Consider the following 191-residue polypeptide: C-type lectin domain family 2 member D (191 aa).

Over 1 to 38 the chain is Cytoplasmic; it reads MHDSNNVEKDITPSELPANPGCLHSKEHSIKATLIWRL. The chain crosses the membrane as a helical; Signal-anchor for type II membrane protein span at residues 39 to 59; it reads FFLIMFLTIIVCGMVAALSAI. At 60–191 the chain is on the extracellular side; that stretch reads RANCHQEPSV…WICSKSDIHV (132 aa). Cys75 and Cys86 form a disulfide bridge. Positions 82 to 185 constitute a C-type lectin domain; the sequence is FQRKCFYFSD…HYTERKWICS (104 aa). Residues Asn95 and Asn147 are each glycosylated (N-linked (GlcNAc...) asparagine). Cys103 and Cys184 are disulfide-bonded.

Homodimer; disulfide-linked. In terms of processing, N-glycosylated. Detected in peripheral blood leukocytes, osteoblasts, lymph node, thymus and spleen. Isoform 1, isoform 2 and isoform 4 are expressed in T- and B-lymphocytes, and at lower levels in NK cells. They are also expressed in B-cell lines and LPS-matured monocyte-derived dendritic cells.

Its subcellular location is the cell membrane. The protein resides in the endoplasmic reticulum. Receptor for KLRB1 that protects target cells against natural killer cell-mediated lysis. Inhibits osteoclast formation. Inhibits bone resorption. Modulates the release of interferon-gamma. Binds high molecular weight sulfated glycosaminoglycans. The protein is C-type lectin domain family 2 member D (CLEC2D) of Homo sapiens (Human).